A 145-amino-acid chain; its full sequence is MKATLRAPASRASAVRPVASLKAAAQRVASVAGVSVASLALTLAAHADATVKLGADSGALEFVPKTLTIKSGETVNFVNNAGFPHNIVFDEDAIPSGVNADAISRDDYLNAPGETYSVKLTAAGEYGYYCEPHQGAGMVGKIIVQ.

The N-terminal 47 residues, methionine 1 to alanine 47, are a transit peptide targeting the chloroplast. Residues aspartate 48–glutamine 145 enclose the Plastocyanin-like domain. Residues histidine 85, cysteine 130, histidine 133, and methionine 138 each coordinate Cu cation.

It belongs to the plastocyanin family. Requires Cu(2+) as cofactor.

It localises to the plastid. The protein resides in the chloroplast thylakoid membrane. In terms of biological role, participates in electron transfer between P700 and the cytochrome b6-f complex in photosystem I. This Chlamydomonas reinhardtii (Chlamydomonas smithii) protein is Plastocyanin, chloroplastic (PETE).